The following is a 124-amino-acid chain: NADH-quinone oxidoreductase subunit K (124 aa).

The next 3 membrane-spanning stretches (helical) occupy residues 28–48 (MEHGLILAAIIFAIGLCGVMV), 52–72 (FLFMLMSLEIMMSAAGLAFIV), and 84–104 (IMFIFILTLAAAEASLGLAIL).

It belongs to the complex I subunit 4L family. In terms of assembly, NDH-1 is composed of 14 different subunits. Subunits NuoA, H, J, K, L, M, N constitute the membrane sector of the complex.

The protein resides in the cell inner membrane. The catalysed reaction is a quinone + NADH + 5 H(+)(in) = a quinol + NAD(+) + 4 H(+)(out). Its function is as follows. NDH-1 shuttles electrons from NADH, via FMN and iron-sulfur (Fe-S) centers, to quinones in the respiratory chain. The immediate electron acceptor for the enzyme in this species is believed to be ubiquinone. Couples the redox reaction to proton translocation (for every two electrons transferred, four hydrogen ions are translocated across the cytoplasmic membrane), and thus conserves the redox energy in a proton gradient. The sequence is that of NADH-quinone oxidoreductase subunit K from Psychrobacter sp. (strain PRwf-1).